The chain runs to 164 residues: Nitric oxide synthase, inducible (164 aa).

(6R)-L-erythro-5,6,7,8-tetrahydrobiopterin is bound at residue Phe3. Tyr18 is a binding site for heme b. Residues 42 to 62 form a calmodulin-binding region; sequence FKGLIRAVLFSQTLIKSALAK. The region spanning 66-164 is the Flavodoxin-like domain; the sequence is CTVLYATETG…SRMYPHFCAF (99 aa). FMN contacts are provided by Thr72, Glu73, Thr74, Lys76, Ser77, Ser118, Thr119, Ser155, and Cys162.

This sequence belongs to the NOS family. As to quaternary structure, homodimer. Requires heme b as cofactor. FAD is required as a cofactor. FMN serves as cofactor. It depends on (6R)-L-erythro-5,6,7,8-tetrahydrobiopterin as a cofactor.

Its subcellular location is the cytoplasm. The protein resides in the cytosol. It carries out the reaction 2 L-arginine + 3 NADPH + 4 O2 + H(+) = 2 L-citrulline + 2 nitric oxide + 3 NADP(+) + 4 H2O. With respect to regulation, not stimulated by calcium/calmodulin. Functionally, produces nitric oxide (NO) which is a messenger molecule with diverse functions throughout the body. In macrophages, NO mediates tumoricidal and bactericidal actions. Also has nitrosylase activity and mediates cysteine S-nitrosylation of cytoplasmic target proteins such COX2. This Carassius auratus (Goldfish) protein is Nitric oxide synthase, inducible (nos2).